We begin with the raw amino-acid sequence, 258 residues long: Apolipoprotein A-I (258 aa).

A signal peptide spans Met1 to Ala18. The interval Val32–Lys63 is 3 X approximate tandem repeats. 2 tandem repeats follow at residues Met64–Pro85 and Pro86–Met106. The interval Met64 to Pro258 is 10 X approximate tandem repeats. One copy of the 3; half-length repeat lies at Lys107 to Glu117. Repeat copies occupy residues Pro118–Glu139, Pro140–Asp161, Pro162–Met183, Pro184–Ala205, Pro206–Ala227, Pro228–Ala238, and Pro239–Pro258. The segment at Phe233–Pro258 is disordered. The span at Lys246–Pro258 shows a compositional bias: polar residues.

This sequence belongs to the apolipoprotein A1/A4/E family. As to expression, major protein of plasma HDL, also found in chylomicrons. Expressed in liver, intestine and muscle.

It is found in the secreted. Participates in the reverse transport of cholesterol from tissues to the liver for excretion by promoting cholesterol efflux from tissues and by acting as a cofactor for the lecithin cholesterol acyltransferase (LCAT). This Salmo salar (Atlantic salmon) protein is Apolipoprotein A-I (apoa1).